The primary structure comprises 470 residues: 24-hydroxycholesterol 7-alpha-hydroxylase (470 aa).

Helical transmembrane passes span Ile-3–Phe-23 and Val-270–Ile-290. Cys-415 contacts heme.

Belongs to the cytochrome P450 family. Heme serves as cofactor. Liver specific. Hepatic expression is sexually dimorphic (female &gt; male).

The protein localises to the endoplasmic reticulum membrane. It is found in the microsome membrane. The catalysed reaction is (24S)-hydroxycholesterol + reduced [NADPH--hemoprotein reductase] + O2 = (24S)-7alpha-dihydroxycholesterol + oxidized [NADPH--hemoprotein reductase] + H2O + H(+). Its pathway is steroid metabolism; cholesterol degradation. It functions in the pathway lipid metabolism; bile acid biosynthesis. Functionally, a cytochrome P450 monooxygenase involved in neural cholesterol clearance through bile acid synthesis. Catalyzes 7-alpha hydroxylation of (24S)-hydroxycholesterol, a neural oxysterol that is metabolized to bile acids in the liver. Mechanistically, uses molecular oxygen inserting one oxygen atom into a substrate, and reducing the second into a water molecule, with two electrons provided by NADPH via cytochrome P450 reductase (CPR; NADPH-ferrihemoprotein reductase). The sequence is that of 24-hydroxycholesterol 7-alpha-hydroxylase (Cyp39a1) from Mus musculus (Mouse).